The primary structure comprises 532 residues: Invertase 1 (532 aa).

The signal sequence occupies residues M1–A19. A glycan (N-linked (GlcNAc...) asparagine) is linked at N23. Substrate-binding positions include W39–D42 and Q60. The active site involves D42. N-linked (GlcNAc...) asparagine glycosylation is present at N64. Y102–S103 is a binding site for substrate. N111, N112, N118, and N165 each carry an N-linked (GlcNAc...) asparagine glycan. Substrate contacts are provided by residues R170 to D171 and E223. An N-linked (GlcNAc...) asparagine glycan is attached at N275. Position 311 (W311) interacts with substrate. N356, N369, N384, N398, and N512 each carry an N-linked (GlcNAc...) asparagine glycan.

The protein belongs to the glycosyl hydrolase 32 family. Post-translationally, isoform Secreted is glycosylated. Isoform Intracellular is not glycosylated.

It is found in the cytoplasm. It localises to the secreted. The enzyme catalyses Hydrolysis of terminal non-reducing beta-D-fructofuranoside residues in beta-D-fructofuranosides.. This is Invertase 1 (SUC1) from Saccharomyces cerevisiae (Baker's yeast).